Here is a 737-residue protein sequence, read N- to C-terminus: Dual specificity protein kinase KNS1 (737 aa).

Disordered regions lie at residues 1–33 (MSQNIQIGTRKRSRANMNNSTTTGPANNTSSNK) and 270–290 (SSLRKFTSNGSSESASSNKSN). Polar residues predominate over residues 15–33 (ANMNNSTTTGPANNTSSNK). Low complexity predominate over residues 277-290 (SNGSSESASSNKSN). Positions 313-720 (FVVKDLLGQG…AKDALDHEWF (408 aa)) constitute a Protein kinase domain. Residues 319 to 327 (LGQGTFGKV) and Lys-343 each bind ATP. The active-site Proton acceptor is the Asp-440. A Phosphothreonine modification is found at Thr-562.

Belongs to the protein kinase superfamily. CMGC Ser/Thr protein kinase family. Lammer subfamily. Post-translationally, phosphorylated (auto-) on Ser/Thr/Tyr.

The catalysed reaction is L-seryl-[protein] + ATP = O-phospho-L-seryl-[protein] + ADP + H(+). It catalyses the reaction L-threonyl-[protein] + ATP = O-phospho-L-threonyl-[protein] + ADP + H(+). The enzyme catalyses L-tyrosyl-[protein] + ATP = O-phospho-L-tyrosyl-[protein] + ADP + H(+). Its function is as follows. Nonessential protein kinase. The polypeptide is Dual specificity protein kinase KNS1 (KNS1) (Saccharomyces cerevisiae (strain ATCC 204508 / S288c) (Baker's yeast)).